The following is a 300-amino-acid chain: ESX-5 secretion-associated protein EspG5 (300 aa).

It belongs to the EspG family. Interacts specifically with ESX-5-dependent PE/PPE proteins. Forms a 1:1:1 heterotrimeric complex with the PE25/PPE41 dimer, via PPE41. Binding of EspG5 does not cause conformational changes in the PE25/PPE41 dimer. Forms a 1:1:1 heterotrimeric complex with the PE8/PPE15 dimer, via PPE15.

The protein resides in the cytoplasm. Its function is as follows. Specific chaperone for cognate PE/PPE proteins. Plays an important role in preventing aggregation of PE/PPE dimers. This chain is ESX-5 secretion-associated protein EspG5, found in Mycobacterium tuberculosis (strain ATCC 25618 / H37Rv).